We begin with the raw amino-acid sequence, 150 residues long: Ribonuclease H (150 aa).

In terms of domain architecture, RNase H type-1 spans 3 to 144 (GEDIVEIYTD…ADALARQGMA (142 aa)). Mg(2+)-binding residues include Asp12, Glu50, Asp72, and Asp136.

This sequence belongs to the RNase H family. Monomer. Requires Mg(2+) as cofactor.

It is found in the cytoplasm. It carries out the reaction Endonucleolytic cleavage to 5'-phosphomonoester.. In terms of biological role, endonuclease that specifically degrades the RNA of RNA-DNA hybrids. The sequence is that of Ribonuclease H from Parvibaculum lavamentivorans (strain DS-1 / DSM 13023 / NCIMB 13966).